Reading from the N-terminus, the 466-residue chain is 3-isopropylmalate dehydratase large subunit (466 aa).

[4Fe-4S] cluster is bound by residues cysteine 347, cysteine 407, and cysteine 410.

The protein belongs to the aconitase/IPM isomerase family. LeuC type 1 subfamily. As to quaternary structure, heterodimer of LeuC and LeuD. It depends on [4Fe-4S] cluster as a cofactor.

It carries out the reaction (2R,3S)-3-isopropylmalate = (2S)-2-isopropylmalate. Its pathway is amino-acid biosynthesis; L-leucine biosynthesis; L-leucine from 3-methyl-2-oxobutanoate: step 2/4. In terms of biological role, catalyzes the isomerization between 2-isopropylmalate and 3-isopropylmalate, via the formation of 2-isopropylmaleate. The protein is 3-isopropylmalate dehydratase large subunit of Pectobacterium atrosepticum (strain SCRI 1043 / ATCC BAA-672) (Erwinia carotovora subsp. atroseptica).